The sequence spans 115 residues: DNA repair protein homolog YozK (115 aa).

The region spanning 12 to 115 (ILCVDMKSFY…EKCVHTYSID (104 aa)) is the UmuC domain. D16 and D115 together coordinate Mg(2+).

It belongs to the DNA polymerase type-Y family. Requires Mg(2+) as cofactor.

The sequence is that of DNA repair protein homolog YozK (yozK) from Bacillus subtilis (strain 168).